The sequence spans 206 residues: Large ribosomal subunit protein mL62 (206 aa).

A mitochondrion-targeting transit peptide spans 1–29 (MAATRCLRWGLSRAGVWLLPPPARCPRRA). The residue at position 90 (Q90) is an N5-methylglutamine.

Belongs to the prokaryotic/mitochondrial release factor family. Mitochondrion-specific ribosomal protein mL62 subfamily. As to quaternary structure, component of the mitochondrial large ribosomal subunit (mt-LSU). Mature mammalian 55S mitochondrial ribosomes consist of a small (28S) and a large (39S) subunit. The 28S small subunit contains a 12S ribosomal RNA (12S mt-rRNA) and 30 different proteins. The 39S large subunit contains a 16S rRNA (16S mt-rRNA), a copy of mitochondrial valine transfer RNA (mt-tRNA(Val)), which plays an integral structural role, and 52 different proteins. In terms of processing, methylation of glutamine in the GGQ triplet by HEMK1. As to expression, down-regulated during the in vitro differentiation of HT29-D4 colon carcinoma cells.

It is found in the mitochondrion. The enzyme catalyses an N-acyl-L-alpha-aminoacyl-tRNA + H2O = an N-acyl-L-amino acid + a tRNA + H(+). Functionally, essential peptidyl-tRNA hydrolase component of the mitochondrial large ribosomal subunit. Acts as a codon-independent translation release factor that has lost all stop codon specificity and directs the termination of translation in mitochondrion, possibly in case of abortive elongation. Involved in the hydrolysis of peptidyl-tRNAs that have been prematurely terminated and thus in the recycling of stalled mitochondrial ribosomes. The sequence is that of Large ribosomal subunit protein mL62 from Homo sapiens (Human).